The primary structure comprises 505 residues: Neuronal acetylcholine receptor subunit alpha-3 (505 aa).

The first 31 residues, 1–31 (MGSGPLSLPLALSPPRLLLLLLLSLLPVARA), serve as a signal peptide directing secretion. At 32-250 (SEAEHRLFER…PLFYTINLII (219 aa)) the chain is on the extracellular side. Asn55 and Asn172 each carry an N-linked (GlcNAc...) asparagine glycan. Intrachain disulfides connect Cys159/Cys173 and Cys223/Cys224. A helical membrane pass occupies residues 251–266 (PCLLISFLTVLVFYLP). Residues 267–268 (SD) are Cytoplasmic-facing. Residues 269–285 (CGEKVTLCISVLLSLTV) form a helical membrane-spanning segment. The Extracellular portion of the chain corresponds to 286–307 (FLLVITETIPSTSLVIPLIGEY). A helical membrane pass occupies residues 308–326 (LLFTMIFVTLSIVITVFVL). The Cytoplasmic segment spans residues 327 to 474 (NVHYRTPTTH…QDDWKYVAMV (148 aa)). A phosphoserine mark is found at Ser413 and Ser416. The helical transmembrane segment at 475-493 (IDRIFLWVFTLVCILGTAG) threads the bilayer. The Extracellular segment spans residues 494–505 (LFLQPLMAREDA).

The protein belongs to the ligand-gated ion channel (TC 1.A.9) family. Acetylcholine receptor (TC 1.A.9.1) subfamily. Alpha-3/CHRNA3 sub-subfamily. As to quaternary structure, neuronal AChR is composed of two different types of subunits: alpha and beta. CHRNA3/Alpha-3 subunit can be combined to CHRNA5/alpha-5, CHRNB2/beta-2 CHRNB3/beta-3 or CHRNB4/beta-4 to give rise to functional receptors. Forms stoichiometries such as (CHRNA3)2:(CHRNB4)3 or (CHRNA3:CHRNB4)2:CHRNB3. Part of a complex composed of STUB1/CHIP, VCP/p97, CHRNA3, and UBXN2A that modulates the ubiquitination and endoplasmic reticulum-associated degradation (ERAD) of CHRNA3. Within the complex UBXN2A acts as a scaffold protein required for the interaction of CHRNA3 with VCP/p97, this interaction also inhibits CHRNA3 ubiquitination by STUB1/CHIP and subsequently ERAD. Interacts with UBXN2A (via SEP domain), the interaction is required for the interaction of CHRNA3 in the STUB1:VCP:UBXN2A complex. Interacts with RIC3; which is required for proper folding and assembly. Interacts with LYPD6. Ubiquitinated; by STUB1/CHIP and thereafter degraded by the 26S proteosome complex.

The protein localises to the synaptic cell membrane. It localises to the cell membrane. Its subcellular location is the endoplasmic reticulum. It is found in the golgi apparatus. The enzyme catalyses Ca(2+)(in) = Ca(2+)(out). The catalysed reaction is K(+)(in) = K(+)(out). It carries out the reaction Na(+)(in) = Na(+)(out). Its activity is regulated as follows. Activated by a myriad of ligands such as acetylcholine, cytisine, nicotine, choline and epibatidine. The heteropentamer CHRNA3:CHRNB2 activity is blocked by alpha-conotoxins ImI, ImII, PnIA, GID and MII. The heteropentamer CHRNA3:CHRNB4 activity is blocked by the alpha-conotoxin ImI and AuIB. Functionally, component of neuronal acetylcholine receptors (nAChRs) that function as pentameric, ligand-gated cation channels with high calcium permeability among other activities. nAChRs are excitatory neurotrasnmitter receptors formed by a collection of nAChR subunits known to mediate synaptic transmission in the nervous system and the neuromuscular junction. Each nAchR subunit confers differential attributes to channel properties, including activation, deactivation and desensitization kinetics, pH sensitivity, cation permeability, and binding to allosteric modulators. CHRNA3 forms heteropentameric neuronal acetylcholine receptors with CHRNB2 and CHRNB4, with CHRNA5, and CHRNB3 as accesory subunits. CHRNA3:CHRNB4 being predominant in neurons of the autonomic ganglia, it is known as ganglionic nicotinic receptor. CHRNA3:CHRNB4 or CHRNA3:CHRNA5:CHRNB4 play also an important role in the habenulo-interpeduncular tract, modulating the mesolimbic dopamine system and affecting reward circuits and addiction. Hypothalamic CHRNA3:CHRNB4 nAChR activation by nicotine leads to activation of POMC neurons and a decrease in food intake. Also expressed in the urothelium where it modulates reflex bladder activity by increasing intracellular calcium through extracellular influx and basal ATP release. In Homo sapiens (Human), this protein is Neuronal acetylcholine receptor subunit alpha-3.